The sequence spans 72 residues: Translation initiation factor IF-1 (72 aa).

The S1-like domain occupies 1-72 (MAKEEVLEFP…TKGRITYRFK (72 aa)).

This sequence belongs to the IF-1 family. Component of the 30S ribosomal translation pre-initiation complex which assembles on the 30S ribosome in the order IF-2 and IF-3, IF-1 and N-formylmethionyl-tRNA(fMet); mRNA recruitment can occur at any time during PIC assembly.

It localises to the cytoplasm. Its function is as follows. One of the essential components for the initiation of protein synthesis. Stabilizes the binding of IF-2 and IF-3 on the 30S subunit to which N-formylmethionyl-tRNA(fMet) subsequently binds. Helps modulate mRNA selection, yielding the 30S pre-initiation complex (PIC). Upon addition of the 50S ribosomal subunit IF-1, IF-2 and IF-3 are released leaving the mature 70S translation initiation complex. This Brucella abortus (strain 2308) protein is Translation initiation factor IF-1.